The chain runs to 593 residues: Arginine--tRNA ligase (593 aa).

Positions 138 to 148 (ANPTGPLHVGH) match the 'HIGH' region motif.

This sequence belongs to the class-I aminoacyl-tRNA synthetase family. In terms of assembly, monomer.

It localises to the cytoplasm. The catalysed reaction is tRNA(Arg) + L-arginine + ATP = L-arginyl-tRNA(Arg) + AMP + diphosphate. This is Arginine--tRNA ligase from Burkholderia vietnamiensis (strain G4 / LMG 22486) (Burkholderia cepacia (strain R1808)).